The following is a 419-amino-acid chain: Serine--tRNA ligase (419 aa).

Position 225–227 (225–227 (TAE)) interacts with L-serine. Residue 256 to 258 (RKE) participates in ATP binding. L-serine is bound at residue glutamate 279. Residue 343-346 (EISS) coordinates ATP. Serine 378 is an L-serine binding site.

This sequence belongs to the class-II aminoacyl-tRNA synthetase family. Type-1 seryl-tRNA synthetase subfamily. In terms of assembly, homodimer. The tRNA molecule binds across the dimer.

Its subcellular location is the cytoplasm. The catalysed reaction is tRNA(Ser) + L-serine + ATP = L-seryl-tRNA(Ser) + AMP + diphosphate + H(+). The enzyme catalyses tRNA(Sec) + L-serine + ATP = L-seryl-tRNA(Sec) + AMP + diphosphate + H(+). Its pathway is aminoacyl-tRNA biosynthesis; selenocysteinyl-tRNA(Sec) biosynthesis; L-seryl-tRNA(Sec) from L-serine and tRNA(Sec): step 1/1. Functionally, catalyzes the attachment of serine to tRNA(Ser). Is also able to aminoacylate tRNA(Sec) with serine, to form the misacylated tRNA L-seryl-tRNA(Sec), which will be further converted into selenocysteinyl-tRNA(Sec). The sequence is that of Serine--tRNA ligase from Pelagibacter ubique (strain HTCC1062).